The chain runs to 70 residues: MPRKIEEIKDFLLTARRKDAKSVKIKKNKDNVKFKVRCSRYLYTLVITDKEKAEKLKQSLPPGLAVKELK.

Lys-4 participates in a covalent cross-link: Glycyl lysine isopeptide (Lys-Gly) (interchain with G-Cter in SUMO2). N6-acetyllysine; alternate is present on Lys-9. A Glycyl lysine isopeptide (Lys-Gly) (interchain with G-Cter in SUMO2); alternate cross-link involves residue Lys-9. Lys-67 is subject to N6-acetyllysine.

It belongs to the eukaryotic ribosomal protein eL38 family. In terms of assembly, component of the large ribosomal subunit.

The protein localises to the cytoplasm. Component of the large ribosomal subunit. The ribosome is a large ribonucleoprotein complex responsible for the synthesis of proteins in the cell. The polypeptide is Large ribosomal subunit protein eL38 (RPL38) (Homo sapiens (Human)).